A 259-amino-acid chain; its full sequence is Expansin-B6 (259 aa).

The N-terminal stretch at 1–24 (MASSSHRYFALLALFAVSLKFCYC) is a signal peptide. The N-linked (GlcNAc...) asparagine glycan is linked to N26. An Expansin-like EG45 domain is found at 52–160 (GGACGFAVAN…IRVECLYRRT (109 aa)). 3 disulfides stabilise this stretch: C55–C82, C85–C155, and C90–C96. The Expansin-like CBD domain maps to 173-254 (YYISFVVEYE…NWKPNETYRS (82 aa)). Residue N249 is glycosylated (N-linked (GlcNAc...) asparagine).

This sequence belongs to the expansin family. Expansin B subfamily.

Its subcellular location is the secreted. The protein localises to the cell wall. It localises to the membrane. May cause loosening and extension of plant cell walls by disrupting non-covalent bonding between cellulose microfibrils and matrix glucans. The sequence is that of Expansin-B6 from Arabidopsis thaliana (Mouse-ear cress).